Reading from the N-terminus, the 278-residue chain is Digeranylgeranylglyceryl phosphate synthase (278 aa).

7 helical membrane passes run 12-32, 34-54, 92-112, 129-149, 199-219, 221-241, and 257-277; these read LKNC…ASNF, FGAL…CGFG, IMIF…MAVL, IIGN…GGIA, IYIS…PYLT, IFGI…LAGF, and SKNI…GSIF.

The protein belongs to the UbiA prenyltransferase family. DGGGP synthase subfamily. The cofactor is Mg(2+).

The protein resides in the cell membrane. The catalysed reaction is sn-3-O-(geranylgeranyl)glycerol 1-phosphate + (2E,6E,10E)-geranylgeranyl diphosphate = 2,3-bis-O-(geranylgeranyl)-sn-glycerol 1-phosphate + diphosphate. It functions in the pathway membrane lipid metabolism; glycerophospholipid metabolism. In terms of biological role, prenyltransferase that catalyzes the transfer of the geranylgeranyl moiety of geranylgeranyl diphosphate (GGPP) to the C2 hydroxyl of (S)-3-O-geranylgeranylglyceryl phosphate (GGGP). This reaction is the second ether-bond-formation step in the biosynthesis of archaeal membrane lipids. The polypeptide is Digeranylgeranylglyceryl phosphate synthase (Methanococcus vannielii (strain ATCC 35089 / DSM 1224 / JCM 13029 / OCM 148 / SB)).